The chain runs to 251 residues: Hydroxyacylglutathione hydrolase (251 aa).

Zn(2+) is bound by residues His53, His55, Asp57, His58, His110, Asp127, and His165.

It belongs to the metallo-beta-lactamase superfamily. Glyoxalase II family. In terms of assembly, monomer. The cofactor is Zn(2+).

It carries out the reaction an S-(2-hydroxyacyl)glutathione + H2O = a 2-hydroxy carboxylate + glutathione + H(+). It participates in secondary metabolite metabolism; methylglyoxal degradation; (R)-lactate from methylglyoxal: step 2/2. Thiolesterase that catalyzes the hydrolysis of S-D-lactoyl-glutathione to form glutathione and D-lactic acid. This Escherichia coli O45:K1 (strain S88 / ExPEC) protein is Hydroxyacylglutathione hydrolase.